A 745-amino-acid chain; its full sequence is Elongation factor G, mitochondrial (745 aa).

The tr-type G domain maps to 40-317 (ERIRNIGISA…AVLDYLPNPG (278 aa)). GTP is bound by residues 49 to 56 (AHIDSGKT), 116 to 120 (DTPGH), and 170 to 173 (NKLD).

The protein belongs to the TRAFAC class translation factor GTPase superfamily. Classic translation factor GTPase family. EF-G/EF-2 subfamily.

The protein localises to the mitochondrion. The protein operates within protein biosynthesis; polypeptide chain elongation. In terms of biological role, mitochondrial GTPase that catalyzes the GTP-dependent ribosomal translocation step during translation elongation. During this step, the ribosome changes from the pre-translocational (PRE) to the post-translocational (POST) state as the newly formed A-site-bound peptidyl-tRNA and P-site-bound deacylated tRNA move to the P and E sites, respectively. Catalyzes the coordinated movement of the two tRNA molecules, the mRNA and conformational changes in the ribosome. Essential during development as it acts as a retrograde signal from mitochondria to the nucleus to slow down cell proliferation if mitochondrial energy output is low. This Drosophila sechellia (Fruit fly) protein is Elongation factor G, mitochondrial.